A 486-amino-acid polypeptide reads, in one-letter code: Ribulose bisphosphate carboxylase large chain (486 aa).

Residues Asn125 and Thr175 each coordinate substrate. Lys177 acts as the Proton acceptor in catalysis. Lys179 provides a ligand contact to substrate. Mg(2+) contacts are provided by Lys203, Asp205, and Glu206. Residue Lys203 is modified to N6-carboxylysine. His295 (proton acceptor) is an active-site residue. Substrate contacts are provided by Arg296, His328, and Ser380.

The protein belongs to the RuBisCO large chain family. Type I subfamily. As to quaternary structure, heterohexadecamer of 8 large chains and 8 small chains. Mg(2+) serves as cofactor.

It catalyses the reaction 2 (2R)-3-phosphoglycerate + 2 H(+) = D-ribulose 1,5-bisphosphate + CO2 + H2O. The enzyme catalyses D-ribulose 1,5-bisphosphate + O2 = 2-phosphoglycolate + (2R)-3-phosphoglycerate + 2 H(+). Functionally, ruBisCO catalyzes two reactions: the carboxylation of D-ribulose 1,5-bisphosphate, the primary event in carbon dioxide fixation, as well as the oxidative fragmentation of the pentose substrate. Both reactions occur simultaneously and in competition at the same active site. In Bradyrhizobium diazoefficiens (strain JCM 10833 / BCRC 13528 / IAM 13628 / NBRC 14792 / USDA 110), this protein is Ribulose bisphosphate carboxylase large chain.